Reading from the N-terminus, the 377-residue chain is Nitric oxide reductase FlRd-NAD(+) reductase (377 aa).

It belongs to the FAD-dependent oxidoreductase family. The cofactor is FAD.

The protein localises to the cytoplasm. It catalyses the reaction 2 reduced [nitric oxide reductase rubredoxin domain] + NAD(+) + H(+) = 2 oxidized [nitric oxide reductase rubredoxin domain] + NADH. It functions in the pathway nitrogen metabolism; nitric oxide reduction. Its function is as follows. One of at least two accessory proteins for anaerobic nitric oxide (NO) reductase. Reduces the rubredoxin moiety of NO reductase. This is Nitric oxide reductase FlRd-NAD(+) reductase from Salmonella typhimurium (strain LT2 / SGSC1412 / ATCC 700720).